Here is a 287-residue protein sequence, read N- to C-terminus: Protease HtpX (287 aa).

The next 2 helical transmembrane spans lie at 4–24 and 36–56; these read IMLFLATNLAVVLVLSVVLNI and LSGLLVMAAVFGFGGALISLM. Position 143 (histidine 143) interacts with Zn(2+). Residue glutamate 144 is part of the active site. Histidine 147 contributes to the Zn(2+) binding site. A run of 2 helical transmembrane segments spans residues 158 to 178 and 192 to 212; these read LMQGVVNTFVIFLSRFIANIV and MVYFGVSMVLELVFGFLASFI. Position 221 (glutamate 221) interacts with Zn(2+).

Belongs to the peptidase M48B family. Zn(2+) is required as a cofactor.

The protein localises to the cell inner membrane. This Vibrio parahaemolyticus serotype O3:K6 (strain RIMD 2210633) protein is Protease HtpX.